Consider the following 481-residue polypeptide: Aspartyl/glutamyl-tRNA(Asn/Gln) amidotransferase subunit B (481 aa).

Belongs to the GatB/GatE family. GatB subfamily. In terms of assembly, heterotrimer of A, B and C subunits.

The catalysed reaction is L-glutamyl-tRNA(Gln) + L-glutamine + ATP + H2O = L-glutaminyl-tRNA(Gln) + L-glutamate + ADP + phosphate + H(+). It catalyses the reaction L-aspartyl-tRNA(Asn) + L-glutamine + ATP + H2O = L-asparaginyl-tRNA(Asn) + L-glutamate + ADP + phosphate + 2 H(+). In terms of biological role, allows the formation of correctly charged Asn-tRNA(Asn) or Gln-tRNA(Gln) through the transamidation of misacylated Asp-tRNA(Asn) or Glu-tRNA(Gln) in organisms which lack either or both of asparaginyl-tRNA or glutaminyl-tRNA synthetases. The reaction takes place in the presence of glutamine and ATP through an activated phospho-Asp-tRNA(Asn) or phospho-Glu-tRNA(Gln). This Pseudomonas putida (strain W619) protein is Aspartyl/glutamyl-tRNA(Asn/Gln) amidotransferase subunit B.